The chain runs to 186 residues: Peptidyl-tRNA hydrolase (186 aa).

Tyrosine 14 is a tRNA binding site. Residue histidine 19 is the Proton acceptor of the active site. TRNA is bound by residues tyrosine 61, asparagine 63, and asparagine 107.

Belongs to the PTH family. As to quaternary structure, monomer.

It localises to the cytoplasm. The enzyme catalyses an N-acyl-L-alpha-aminoacyl-tRNA + H2O = an N-acyl-L-amino acid + a tRNA + H(+). In terms of biological role, hydrolyzes ribosome-free peptidyl-tRNAs (with 1 or more amino acids incorporated), which drop off the ribosome during protein synthesis, or as a result of ribosome stalling. Its function is as follows. Catalyzes the release of premature peptidyl moieties from peptidyl-tRNA molecules trapped in stalled 50S ribosomal subunits, and thus maintains levels of free tRNAs and 50S ribosomes. This chain is Peptidyl-tRNA hydrolase, found in Helicobacter pylori (strain J99 / ATCC 700824) (Campylobacter pylori J99).